The chain runs to 388 residues: N-acetylneuraminate epimerase (388 aa).

The first 26 residues, 1–26 (MFSLIGAKRQAIGIAALAWSTGAVMA), serve as a signal peptide directing secretion. Kelch repeat units lie at residues 48-92 (MAYV…AAAG), 94-147 (KIFA…VGLA), 149-186 (GRIAIFGGYNKELFDKYLADVGAIDKDKEPEAYRKLVD), 187-232 (SYMG…ATMG), 236-285 (FLLV…VAGA), 307-356 (ANAA…DAPG), and 358-387 (LLVVGGEDRDGKARKEVFLLKWDGKALSVE).

This sequence belongs to the NanM family. As to quaternary structure, homodimer.

Its subcellular location is the periplasm. It catalyses the reaction N-acetyl-alpha-neuraminate = N-acetyl-beta-neuraminate. In terms of biological role, converts alpha-N-acetylneuranimic acid (Neu5Ac) to the beta-anomer, accelerating the equilibrium between the alpha- and beta-anomers. Probably facilitates sialidase-negative bacteria to compete successfully for limited amounts of extracellular Neu5Ac, which is likely taken up in the beta-anomer. In addition, the rapid removal of sialic acid from solution might be advantageous to the bacterium to damp down host responses. This chain is N-acetylneuraminate epimerase, found in Brucella suis (strain ATCC 23445 / NCTC 10510).